The following is an 82-amino-acid chain: Mu-conotoxin MrVIA (82 aa).

The signal sequence occupies residues 1 to 22 (MKLTCMMIVAVLFLTAWTLVMA). Residues 23 to 49 (DDSNNGLANHFSKSRDEMEDPEASKLE) constitute a propeptide that is removed on maturation. 3 disulfides stabilise this stretch: C53/C71, C60/C76, and C70/C81.

In terms of tissue distribution, expressed by the venom duct.

The protein localises to the secreted. Functionally, muO-conotoxins are gating-modifier toxins that inhibit sodium current by trapping the domain II voltage sensor in the closed position to prevent opening of the sodium channel. This toxin inhibits rNav1.2/SCN2A (IC(50)=532 nM), rNav1.4/SCN4A (IC(50)=438 nM) and rNav1.7/SCN9A (IC(50)=345 nM). It blocks Nav channels by interacting mainly with the C-terminal part of the pore loop of domain-3. It does not bind on site 1. At small concentration, this toxin also acts as a calcium current agonist, whereas at higher doses it blocks fast-inactivating calcium current. The sequence is that of Mu-conotoxin MrVIA from Conus marmoreus (Marble cone).